A 356-amino-acid chain; its full sequence is Peptide chain release factor 1 (356 aa).

Glutamine 233 carries the post-translational modification N5-methylglutamine.

Belongs to the prokaryotic/mitochondrial release factor family. Methylated by PrmC. Methylation increases the termination efficiency of RF1.

The protein resides in the cytoplasm. In terms of biological role, peptide chain release factor 1 directs the termination of translation in response to the peptide chain termination codons UAG and UAA. In Bacillus licheniformis (strain ATCC 14580 / DSM 13 / JCM 2505 / CCUG 7422 / NBRC 12200 / NCIMB 9375 / NCTC 10341 / NRRL NRS-1264 / Gibson 46), this protein is Peptide chain release factor 1.